Here is a 379-residue protein sequence, read N- to C-terminus: Sterol 24-C-methyltransferase erg-4 (379 aa).

Belongs to the class I-like SAM-binding methyltransferase superfamily. Erg6/SMT family.

The enzyme catalyses lanosterol + S-adenosyl-L-methionine = eburicol + S-adenosyl-L-homocysteine + H(+). It participates in steroid metabolism; ergosterol biosynthesis. In terms of biological role, catalyzes the methyl transfer from S-adenosyl-methionine to the C-24 of lanosterol to form eburicol. The sequence is that of Sterol 24-C-methyltransferase erg-4 from Neurospora crassa (strain ATCC 24698 / 74-OR23-1A / CBS 708.71 / DSM 1257 / FGSC 987).